We begin with the raw amino-acid sequence, 132 residues long: Group 2 truncated hemoglobin YjbI (132 aa).

Residues threonine 45, lysine 48, tyrosine 63, and histidine 76 each contribute to the heme site.

Belongs to the truncated hemoglobin family. Group II subfamily. In terms of assembly, monomer. Requires heme as cofactor.

Hemoglobin-like protein that exhibits a low peroxidase activity. Its very high oxygen affinity may rule out the possibility that it is involved in oxygen transport. This is Group 2 truncated hemoglobin YjbI (yjbI) from Bacillus subtilis (strain 168).